Reading from the N-terminus, the 387-residue chain is Chaperone protein DnaJ (387 aa).

Positions 6 to 71 (DYYEILGVPR…EKRRKYDQFG (66 aa)) constitute a J domain. A CR-type zinc finger spans residues 146–228 (GCEKEIPIYR…CGGTGTVRRQ (83 aa)). The Zn(2+) site is built by C159, C162, C176, C179, C202, C205, C216, and C219. 4 CXXCXGXG motif repeats span residues 159–166 (CSVCGGSG), 176–183 (CQKCGGTG), 202–209 (CDACGGVG), and 216–223 (CRECGGTG).

The protein belongs to the DnaJ family. As to quaternary structure, homodimer. It depends on Zn(2+) as a cofactor.

It is found in the cytoplasm. Participates actively in the response to hyperosmotic and heat shock by preventing the aggregation of stress-denatured proteins and by disaggregating proteins, also in an autonomous, DnaK-independent fashion. Unfolded proteins bind initially to DnaJ; upon interaction with the DnaJ-bound protein, DnaK hydrolyzes its bound ATP, resulting in the formation of a stable complex. GrpE releases ADP from DnaK; ATP binding to DnaK triggers the release of the substrate protein, thus completing the reaction cycle. Several rounds of ATP-dependent interactions between DnaJ, DnaK and GrpE are required for fully efficient folding. Also involved, together with DnaK and GrpE, in the DNA replication of plasmids through activation of initiation proteins. The polypeptide is Chaperone protein DnaJ (Caldicellulosiruptor saccharolyticus (strain ATCC 43494 / DSM 8903 / Tp8T 6331)).